The sequence spans 287 residues: (S)-phenoxypropionate/alpha-ketoglutarate-dioxygenase (287 aa).

Fe cation is bound by residues His102 and Asp104. Residues Thr129 and Trp242 each coordinate 2-oxoglutarate. His257 is a Fe cation binding site. 2-oxoglutarate is bound at residue Arg268.

This sequence belongs to the TfdA dioxygenase family. Monomer. Fe cation serves as cofactor. L-ascorbate is required as a cofactor.

It catalyses the reaction (S)-2-(4-chloro-2-methylphenoxy)propanoate + 2-oxoglutarate + O2 = 2-methyl-4-chlorophenol + pyruvate + succinate + CO2. The catalysed reaction is (S)-(2,4-dichlorophenoxy)propanoate + 2-oxoglutarate + O2 = 2,4-dichlorophenol + pyruvate + succinate + CO2. The protein operates within xenobiotic degradation; 2-(2,4-dichlorophenoxy)propanoate degradation. In terms of biological role, involved in the degradation of the phenoxypropionate herbicides. Catalyzes the enantiospecific cleavage of the ether bond in the herbicid S-dichlorprop ((S)-2-(2,4-dichlorophenoxy)propionate)(S-2,4-DP) and S-mecoprop ((S)-2-(4-chloro-2-methylphenoxy)propionate)(S-2,4-MCPP). It can also accept (RS)-2-(4-chloro-2-methylphenoxy)propionate ((RS)-2,4-MCPP) and phenoxyacetate derivatives such as 2,4-dichlorophenoxyacetate (2,4-D), however it can only accept 2-oxoglutarate as oxygen acceptor. This is (S)-phenoxypropionate/alpha-ketoglutarate-dioxygenase from Sphingobium herbicidovorans (strain ATCC 700291 / DSM 11019 / CCUG 56400 / KCTC 2939 / LMG 18315 / NBRC 16415 / MH) (Sphingomonas herbicidovorans).